A 160-amino-acid polypeptide reads, in one-letter code: Endoribonuclease YbeY (160 aa).

H112, H116, and H122 together coordinate Zn(2+). Residues 141–160 (ELGHPDPYACDDEEPPSKEK) form a disordered region.

The protein belongs to the endoribonuclease YbeY family. Requires Zn(2+) as cofactor.

The protein resides in the cytoplasm. In terms of biological role, single strand-specific metallo-endoribonuclease involved in late-stage 70S ribosome quality control and in maturation of the 3' terminus of the 16S rRNA. The protein is Endoribonuclease YbeY of Pseudomonas paraeruginosa (strain DSM 24068 / PA7) (Pseudomonas aeruginosa (strain PA7)).